We begin with the raw amino-acid sequence, 501 residues long: Neuronal acetylcholine receptor subunit beta-2 (501 aa).

Positions 1-25 (MARCSNSMALLFSFGLLWLCSGVLG) are cleaved as a signal peptide. Residues 26-238 (TDTEERLVEH…IIRRKPLFYT (213 aa)) are Extracellular-facing. N-linked (GlcNAc...) asparagine glycans are attached at residues N51 and N168. C155 and C169 form a disulfide bridge. A helical transmembrane segment spans residues 239 to 259 (INLIIPCVLITSLAILVFYLP). Residues 260–267 (SDCGEKMT) lie on the Cytoplasmic side of the membrane. A helical transmembrane segment spans residues 268-288 (LCISVLLALTVFLLLISKIVP). Residues 289–300 (PTSLDVPLVGKY) are Extracellular-facing. A helical transmembrane segment spans residues 301 to 321 (LMFTMVLVTFSIVTSVCVLNV). Topologically, residues 322 to 459 (HHRSPTTHTM…WKYVAMVIDR (138 aa)) are cytoplasmic. Residues 460–480 (LFLWIFVFVCVFGTIGMFLQP) form a helical membrane-spanning segment.

It belongs to the ligand-gated ion channel (TC 1.A.9) family. Acetylcholine receptor (TC 1.A.9.1) subfamily. Beta-2/CHRNB2 sub-subfamily. Neuronal AChR is a heteropentamer composed of two different types of subunits: alpha and beta. CHRNB2/Beta-2 subunit can be combined to CHRNA2/alpha-2, CHRNA3/alpha-3 or CHRNA4/alpha-4, CHRNA5/alpha-5, CHRNA6/alpha-6 and CHRNB3/beta-3 to give rise to functional receptors. CHRNA2:CHRNB2 and CHRNA4:CHRNB2 nAChR complexes exist in two subtypes: LS (low agonist sensitivity) with a (CHRNA2/4)3:(CHRNB2)2 and HS (high agonist sensitivity) with a (CHRNA2/4)2:(CHRNB2)3 stoichiometry; the subtypes differ in their subunit binding interfaces which are involved in ligand binding. Cells produce predominantly an (CHRNA4)3:(CHRNB2)2 nAChR. The stoichiometric form (CHRNA4)2:(CHRNB2)3 expression is selectively up-regulated by nicotine and has lower single channel conductance and calcium permeability. Also part of the stoichiometric forms: (CHRNA4:CHRNB2)2:CHRNB3 or (CHRNA6:CHRNB2)2:CHRNB3. Can form heteropentamers with CHRNA7, mainly found in basal forebrain cholinergic neurons. Interacts with RIC3; which is required for proper folding and assembly. Interacts with LYPD6.

The protein resides in the synaptic cell membrane. It localises to the cell membrane. It carries out the reaction K(+)(in) = K(+)(out). The enzyme catalyses Na(+)(in) = Na(+)(out). The catalysed reaction is Ca(2+)(in) = Ca(2+)(out). Its activity is regulated as follows. Activated by a myriad of ligands such as acetylcholine, cytisine, nicotine, choline and epibatidine. Channel potentiation by calcium is stoichiometry-selective, CHRNA4:CHRNB2 nACh receptor is achieved by calcium association with topographically distinct sites framed by anionic residues within the CHRNA4 subunit and between the CHRNA4 and CHRNB2 subunits. Oligomeric amyloid-beta protein 42 activates specifially CHRNA7:CHRNB2 nAchRs. nAChR activity is inhibited by the antagonist alpha-conotoxins BuIA, PnIA, PnIC, GID and MII, small disulfide-constrained peptides from cone snails. Functionally, component of neuronal acetylcholine receptors (nAChRs) that function as pentameric, ligand-gated cation channels with high calcium permeability among other activities. nAChRs are excitatory neurotrasnmitter receptors formed by a collection of nAChR subunits known to mediate synaptic transmission in the nervous system and the neuromuscular junction. Each nAchR subunit confers differential attributes to channel properties, including activation, deactivation and desensitization kinetics, pH sensitivity, cation permeability, and binding to allosteric modulators. CHRNB2 forms heteropentameric neuronal acetylcholine receptors with CHRNA2, CHRNA3, CHRNA4 and CHRNA6, as well as CHRNA5 and CHRNB3 as accesory subunits. Found in two major stoichiometric forms,(CHRNA4)3:(CHRNB2)2 and (CHRNA4)2:(CHRNB2)3, the two stoichiometric forms differ in their unitary conductance, calcium permeability, ACh sensitivity and potentiation by divalent cation. Heteropentameric channels with CHRNA6 and CHRNA4 exhibit high sensitivity to ACh and nicotine and are predominantly expressed in only a few brain areas, including dopaminergic neurons, norepirephrine neurons and cells of the visual system. nAChrs containing CHRNA6 subunits mediate endogenous cholinergic modulation of dopamine and gamma-aminobutyric acid (GABA) release in response to nicotine at nerve terminals. Also forms functional nAChRs with other subunits such as CHRNA7:CHRNB2, mainly expressed in basal forebrain cholinergic neurons. This chain is Neuronal acetylcholine receptor subunit beta-2 (Chrnb2), found in Mus musculus (Mouse).